The chain runs to 146 residues: Large ribosomal subunit protein uL15 (146 aa).

Basic and acidic residues predominate over residues 1-13 (MKLHELKAAEGSR). The tract at residues 1–56 (MKLHELKAAEGSRRVRNRVGRGAATGNGKTSGRGQKGQKARSGGKLRPGFEGGQLP) is disordered. Gly residues predominate over residues 23–35 (AATGNGKTSGRGQ).

Belongs to the universal ribosomal protein uL15 family. Part of the 50S ribosomal subunit.

In terms of biological role, binds to the 23S rRNA. In Staphylococcus epidermidis (strain ATCC 35984 / DSM 28319 / BCRC 17069 / CCUG 31568 / BM 3577 / RP62A), this protein is Large ribosomal subunit protein uL15.